A 446-amino-acid polypeptide reads, in one-letter code: Phosphoglucosamine mutase (446 aa).

The Phosphoserine intermediate role is filled by S99. Mg(2+)-binding residues include S99, D242, D244, and D246. S99 carries the phosphoserine modification.

It belongs to the phosphohexose mutase family. Mg(2+) is required as a cofactor. Activated by phosphorylation.

The catalysed reaction is alpha-D-glucosamine 1-phosphate = D-glucosamine 6-phosphate. Its function is as follows. Catalyzes the conversion of glucosamine-6-phosphate to glucosamine-1-phosphate. The polypeptide is Phosphoglucosamine mutase (Wolinella succinogenes (strain ATCC 29543 / DSM 1740 / CCUG 13145 / JCM 31913 / LMG 7466 / NCTC 11488 / FDC 602W) (Vibrio succinogenes)).